A 413-amino-acid chain; its full sequence is uncharacterized protein (413 aa).

Belongs to the mimivirus L17x/L18x family.

This is an uncharacterized protein from Acanthamoeba polyphaga (Amoeba).